The sequence spans 433 residues: GTPase Obg (433 aa).

Residues 1 to 159 (MGLTDYCECR…LHVSLEIKYL (159 aa)) enclose the Obg domain. The OBG-type G domain maps to 160 to 329 (ANVGIVGFPN…LVAQVFALHQ (170 aa)). GTP is bound by residues 166–173 (GFPNTGKS), 191–195 (FTTLV), 212–215 (DIPG), 282–285 (NKTD), and 310–312 (ISA). 2 residues coordinate Mg(2+): S173 and T193. An OCT domain is found at 355–433 (ASETDHDPLN…FAGQEFVIND (79 aa)).

Belongs to the TRAFAC class OBG-HflX-like GTPase superfamily. OBG GTPase family. As to quaternary structure, monomer. Requires Mg(2+) as cofactor.

The protein localises to the cytoplasm. Its function is as follows. An essential GTPase which binds GTP, GDP and possibly (p)ppGpp with moderate affinity, with high nucleotide exchange rates and a fairly low GTP hydrolysis rate. Plays a role in control of the cell cycle, stress response, ribosome biogenesis and in those bacteria that undergo differentiation, in morphogenesis control. This Mycoplasma pneumoniae (strain ATCC 29342 / M129 / Subtype 1) (Mycoplasmoides pneumoniae) protein is GTPase Obg.